The chain runs to 1009 residues: Adhesion G-protein coupled receptor G2 (1009 aa).

The signal sequence occupies residues 1 to 37; it reads MLFSGGQYSPVGRPEEVLLIYKIFLVIICFHVILVTS. The Extracellular portion of the chain corresponds to 38 to 617; that stretch reads LKENGNSSLL…SRTSLPPSQM (580 aa). 10 N-linked (GlcNAc...) asparagine glycosylation sites follow: asparagine 43, asparagine 77, asparagine 91, asparagine 103, asparagine 109, asparagine 127, asparagine 136, asparagine 154, asparagine 178, and asparagine 186. Disordered regions lie at residues 279 to 305 and 325 to 346; these read MTPSTPSLTQESNLPSPQPTIPLASSP and SHTLSPVQSSIPSPTTPAPSVP. A compositionally biased stretch (polar residues) spans 280–293; sequence TPSTPSLTQESNLP. Asparagine 362, asparagine 427, asparagine 448, asparagine 453, asparagine 520, asparagine 534, asparagine 539, asparagine 543, and asparagine 589 each carry an N-linked (GlcNAc...) asparagine glycan. The 159-residue stretch at 453–611 folds into the GAIN-B domain; it reads NTTTFAAQDP…GILLDLSRTS (159 aa). 2 disulfides stabilise this stretch: cysteine 562-cysteine 593 and cysteine 581-cysteine 595. Residues 562-611 form a GPS region; the sequence is CVFWDLGRNGGKGGWSSDGCSVKDKRMNETICTCSHLTSFGILLDLSRTS. The segment at 600–611 is stachel; the sequence is SFGILLDLSRTS. Residues 618–640 traverse the membrane as a helical segment; sequence MALTFITYIGCGLSSIFLSVTLV. Topologically, residues 641–655 are cytoplasmic; it reads TYIAFEKIRRDYPSK. The helical transmembrane segment at 656–679 threads the bilayer; sequence ILIQLCAALLLLNLIFLLDSWIAL. The Extracellular segment spans residues 680-683; it reads YNTR. Residues 684–709 form a helical membrane-spanning segment; that stretch reads GFCIAVAVFLHYFLLVSFTWMGLEAF. The cysteines at positions 686 and 770 are disulfide-linked. Residues 710 to 728 lie on the Cytoplasmic side of the membrane; it reads HMYLALVKVFNTYIRKYIL. The helical transmembrane segment at 729–751 threads the bilayer; sequence KFCIVGWGIPAVVVSIVLTISPD. Residues 752 to 776 lie on the Extracellular side of the membrane; sequence NYGIGSYGKFPNGTPDDFCWINSNV. Residues 777–802 traverse the membrane as a helical segment; it reads VFYITVVGYFCVIFLLNVSMFIVVLV. The Cytoplasmic segment spans residues 803–823; sequence QLCRIKKKKQLGAQRKTSIQD. The chain crosses the membrane as a helical span at residues 824 to 845; sequence LRSIAGLTFLLGITWGFAFFAW. Residues 846–850 are Extracellular-facing; the sequence is GPVNV. Residue asparagine 849 is glycosylated (N-linked (GlcNAc...) asparagine). The chain crosses the membrane as a helical span at residues 851-872; the sequence is TFMYLFAIFNTLQGFFIFIFYC. Asparagine 860 contributes to the 3beta-hydroxyandrost-5-en-17-one binding site. Residues 873–1009 lie on the Cytoplasmic side of the membrane; that stretch reads AAKENVRKQW…RGSLHFIEQM (137 aa). Phosphoserine is present on serine 1002.

The protein belongs to the G-protein coupled receptor 2 family. Adhesion G-protein coupled receptor (ADGR) subfamily. Heterodimer of 2 chains generated by proteolytic processing; the large extracellular N-terminal fragment and the membrane-bound C-terminal fragment predominantly remain associated and non-covalently linked. Interacts with CFTR. Post-translationally, proteolytically cleaved into 2 subunits, an extracellular subunit and a seven-transmembrane subunit. Highly glycosylated. As to expression, epididymis-specific expression (at protein level). Associated with apical membranes of efferent ductule and proximal epididymal duct epithelia. Mainly expressed in the nonciliated principal cells of the proximal excurrent ducts.

The protein localises to the apical cell membrane. With respect to regulation, forms a heterodimer of 2 chains generated by proteolytic processing that remain associated through non-covalent interactions mediated by the GAIN-B domain. In the inactivated receptor, the Stachel sequence (also named stalk) is embedded in the GAIN-B domain, where it adopts a beta-strand conformation. On activation, the Stachel moves into the 7 transmembrane region and adopts a twisted hook-shaped configuration that forms contacts within the receptor, leading to coupling of a G-alpha protein, which activates signaling. The cleaved GAIN-B and N-terminal domains can then dissociate from the rest of the receptor. Deoxycorticosterone (DOC) acts as an antagonist of ADGRG2. Its function is as follows. Adhesion G-protein coupled receptor (aGPCR) for steroid hormones, such as dehydroepiandrosterone (DHEA; also named 3beta-hydroxyandrost-5-en-17-one) and androstenedione. Involved in a signal transduction pathway controlling epididymal function and male fertility. Ligand binding causes a conformation change that triggers signaling via guanine nucleotide-binding proteins (G proteins) and modulates the activity of downstream effectors, such as adenylate cyclase. ADGRG2 is coupled to G(s) G proteins and mediates activation of adenylate cyclase activity. Also able to couple with G(q) G proteins in vitro. May regulate fluid exchange within epididymis. The protein is Adhesion G-protein coupled receptor G2 of Mus musculus (Mouse).